Consider the following 326-residue polypeptide: Diphthine methyltransferase (326 aa).

WD repeat units lie at residues 65-105 (MHCD…ELMF), 113-152 (DSSV…IKNK), 155-195 (EHDY…SCIW), and 293-326 (EHES…WEDI).

This sequence belongs to the DPH7 family.

Its subcellular location is the cytoplasm. It localises to the nucleus. It carries out the reaction diphthine methyl ester-[translation elongation factor 2] + H2O = diphthine-[translation elongation factor 2] + methanol + H(+). It participates in protein modification; peptidyl-diphthamide biosynthesis. Its function is as follows. Catalyzes the demethylation of diphthine methyl ester to form diphthine, an intermediate in diphthamide biosynthesis, a post-translational modification of histidine which occurs in translation elongation factor 2 (eft201 and eft202). This Schizosaccharomyces pombe (strain 972 / ATCC 24843) (Fission yeast) protein is Diphthine methyltransferase (rrt2).